A 922-amino-acid chain; its full sequence is Isoleucine--tRNA ligase (922 aa).

A 'HIGH' region motif is present at residues Pro-57–His-67. L-isoleucyl-5'-AMP is bound at residue Glu-553. The 'KMSKS' region motif lies at Lys-594–Ser-598. Lys-597 contacts ATP. Positions 889, 892, 909, and 912 each coordinate Zn(2+).

Belongs to the class-I aminoacyl-tRNA synthetase family. IleS type 1 subfamily. Monomer. It depends on Zn(2+) as a cofactor.

Its subcellular location is the cytoplasm. It carries out the reaction tRNA(Ile) + L-isoleucine + ATP = L-isoleucyl-tRNA(Ile) + AMP + diphosphate. In terms of biological role, catalyzes the attachment of isoleucine to tRNA(Ile). As IleRS can inadvertently accommodate and process structurally similar amino acids such as valine, to avoid such errors it has two additional distinct tRNA(Ile)-dependent editing activities. One activity is designated as 'pretransfer' editing and involves the hydrolysis of activated Val-AMP. The other activity is designated 'posttransfer' editing and involves deacylation of mischarged Val-tRNA(Ile). The sequence is that of Isoleucine--tRNA ligase from Bacillus licheniformis (strain ATCC 14580 / DSM 13 / JCM 2505 / CCUG 7422 / NBRC 12200 / NCIMB 9375 / NCTC 10341 / NRRL NRS-1264 / Gibson 46).